We begin with the raw amino-acid sequence, 630 residues long: Low affinity heme transporter str3 (630 aa).

Residues Met1–Glu26 show a composition bias toward basic and acidic residues. Positions Met1–Thr51 are disordered. Topologically, residues Met1–Arg79 are cytoplasmic. 2 positions are modified to phosphoserine: Ser10 and Ser38. A helical transmembrane segment spans residues Gly80–Ile100. Residues Gln101 to Ser120 lie on the Extracellular side of the membrane. The helical transmembrane segment at Met121–Gly141 threads the bilayer. The Cytoplasmic portion of the chain corresponds to Lys142–Thr154. The chain crosses the membrane as a helical span at residues Leu155–Ala175. A topological domain (extracellular) is located at residue Tyr176. Residues Val177–Val197 form a helical membrane-spanning segment. The Cytoplasmic segment spans residues Val198–Gly208. The helical transmembrane segment at Phe209–Val229 threads the bilayer. Residues Gln230–Tyr241 lie on the Extracellular side of the membrane. Residues Gly242–Leu262 traverse the membrane as a helical segment. The Cytoplasmic portion of the chain corresponds to Glu263–Asp302. Residues Leu303–Thr323 form a helical membrane-spanning segment. The Extracellular segment spans residues Ser324–Met335. The chain crosses the membrane as a helical span at residues Ile336–Ile356. Topologically, residues Ala357–Thr370 are cytoplasmic. A helical transmembrane segment spans residues Phe371–Tyr391. Over Phe392–Asp406 the chain is Extracellular. The helical transmembrane segment at Trp407–Ala427 threads the bilayer. At Met428–Gln439 the chain is on the cytoplasmic side. The helical transmembrane segment at Ile440–Ala460 threads the bilayer. Over Thr461–Asp465 the chain is Extracellular. Residues Leu466–Val486 form a helical membrane-spanning segment. At Ser487–Ser502 the chain is on the cytoplasmic side. Residues Leu503–Phe523 traverse the membrane as a helical segment. Positions Ile522 to Phe576 are heme binding. Residues Ser524–Ser574 are Extracellular-facing. Residues Met575–Trp595 traverse the membrane as a helical segment. Residues Gln596–Ile630 are Cytoplasmic-facing. The tract at residues Gly610–Ile630 is disordered. A compositionally biased stretch (basic and acidic residues) spans Asp611–Ile630.

The protein belongs to the major facilitator superfamily.

It localises to the cell membrane. Functionally, low affinity heme transporter involved in the assimilation of exogenous heme during conditions of low cellular iron. The chain is Low affinity heme transporter str3 from Schizosaccharomyces pombe (strain 972 / ATCC 24843) (Fission yeast).